The chain runs to 185 residues: Dual specificity protein phosphatase 3 (185 aa).

In terms of domain architecture, Tyrosine-protein phosphatase spans 28–179 (QPCNEVVPRV…LCQLNDRLAK (152 aa)). Cys-124 serves as the catalytic Phosphocysteine intermediate.

Belongs to the protein-tyrosine phosphatase family. Non-receptor class dual specificity subfamily. In terms of assembly, microtubule inner protein component of sperm flagellar doublet microtubules. Interacts with VRK3; this interaction activates DUSP3 phosphatase activity.

The protein resides in the nucleus. Its subcellular location is the cytoplasm. The protein localises to the cytoskeleton. It is found in the flagellum axoneme. The enzyme catalyses O-phospho-L-tyrosyl-[protein] + H2O = L-tyrosyl-[protein] + phosphate. It catalyses the reaction O-phospho-L-seryl-[protein] + H2O = L-seryl-[protein] + phosphate. The catalysed reaction is O-phospho-L-threonyl-[protein] + H2O = L-threonyl-[protein] + phosphate. In terms of biological role, shows activity both for tyrosine-protein phosphate and serine-protein phosphate, but displays a strong preference toward phosphotyrosines. Specifically dephosphorylates and inactivates ERK1 and ERK2. This is Dual specificity protein phosphatase 3 (Dusp3) from Mus musculus (Mouse).